The chain runs to 1062 residues: 3-hydroxy-3-methylglutaryl-coenzyme A reductase 2 (1062 aa).

Residues 1-34 (MAPTNTKDSDTPGWLHRHGTSVLGSVARQACKQP) lie on the Cytoplasmic side of the membrane. Residues 35–55 (IYTLVITALLATMTYTSLLEG) traverse the membrane as a helical segment. Residues 56–230 (SLYNANLTRL…SFVGLIKHAQ (175 aa)) lie on the Lumenal side of the membrane. Asn61 is a glycosylation site (N-linked (GlcNAc...) asparagine). The chain crosses the membrane as a helical span at residues 231–251 (IIDIIIMLLAYLAMHLTFLSL). In terms of domain architecture, SSD spans 233-403 (DIIIMLLAYL…FTFYISVLCV (171 aa)). The Cytoplasmic portion of the chain corresponds to 252–261 (FMSMRQLGSR). Residues 262–282 (FWLAYSVLLSGFFSLFFGLKV) traverse the membrane as a helical segment. The Lumenal segment spans residues 283 to 287 (TTSSG). Residues 288 to 308 (VSTSMITLSECLPILVIIVGF) traverse the membrane as a helical segment. Residues 309–355 (EKPIRLTRAVLRAATESYLPAKPMARRSTPEAIEVAIMREGWRIVRD) lie on the Cytoplasmic side of the membrane. Residues 356 to 375 (YAIEIAILAAGATSRVQGAL) form a helical membrane-spanning segment. Residues 376–377 (PQ) lie on the Lumenal side of the membrane. A helical membrane pass occupies residues 378–398 (FCFLAAWILLFDSLLLFTFYI). Over 399 to 450 (SVLCVKLEITRIRKHVEPRRALEDDDISTGNQDFDSRVFGCKVKAANISRFK) the chain is Cytoplasmic. The helical transmembrane segment at 451-471 (FLMVGGFVLFNVLQLSSLTYG) threads the bilayer. Residues 472–564 (NVRVSDWMPY…GCVLAWLEDP (93 aa)) are Lumenal-facing. N-linked (GlcNAc...) asparagine glycosylation is present at Asn484. A helical transmembrane segment spans residues 565–585 (VISKWVIAALFLSLVLNSYLM). The Cytoplasmic segment spans residues 586 to 1062 (KAARWNLRQS…NRSKVAAKTG (477 aa)). Glu744 acts as the Charge relay system in catalysis. 750 to 756 (SASRGCK) contributes to the CoA binding site. NADP(+)-binding positions include 811-813 (SRF) and 838-846 (DAMGMNMIS). The active-site Charge relay system is Lys877. A CoA-binding site is contributed by 906-908 (VLK). The Charge relay system role is filled by Asp953. 1048–1049 (AH) is a binding site for CoA. Residue His1049 is the Proton donor of the active site. Residue 1053-1054 (NR) coordinates NADP(+).

It belongs to the HMG-CoA reductase family.

It is found in the endoplasmic reticulum membrane. It catalyses the reaction (R)-mevalonate + 2 NADP(+) + CoA = (3S)-3-hydroxy-3-methylglutaryl-CoA + 2 NADPH + 2 H(+). It functions in the pathway metabolic intermediate biosynthesis; (R)-mevalonate biosynthesis; (R)-mevalonate from acetyl-CoA: step 3/3. Its function is as follows. HMG-CoA reductase; part of the first module of ergosterol biosynthesis pathway that includes the early steps of the pathway, conserved across all eukaryotes, and which results in the formation of mevalonate from acetyl-coenzyme A (acetyl-CoA). Hmg1 and hmg2 catalyze the reduction of hydroxymethylglutaryl-CoA (HMG-CoA) to mevalonate. The first module starts with the action of the cytosolic acetyl-CoA acetyltransferase erg10B that catalyzes the formation of acetoacetyl-CoA. The hydroxymethylglutaryl-CoA synthases erg13A and erg13B then condense acetyl-CoA with acetoacetyl-CoA to form HMG-CoA. The rate-limiting step of the early module is the reduction to mevalonate by the 3-hydroxy-3-methylglutaryl-coenzyme A (HMG-CoA) reductases hmg1 and hmg2. Mevalonate is also a precursor for the extracellular siderophore triacetylfusarinine C (TAFC). The protein is 3-hydroxy-3-methylglutaryl-coenzyme A reductase 2 of Aspergillus fumigatus (strain ATCC MYA-4609 / CBS 101355 / FGSC A1100 / Af293) (Neosartorya fumigata).